The following is a 156-amino-acid chain: Small ribosomal subunit protein uS7 (156 aa).

It belongs to the universal ribosomal protein uS7 family. As to quaternary structure, part of the 30S ribosomal subunit. Contacts proteins S9 and S11.

Functionally, one of the primary rRNA binding proteins, it binds directly to 16S rRNA where it nucleates assembly of the head domain of the 30S subunit. Is located at the subunit interface close to the decoding center, probably blocks exit of the E-site tRNA. This is Small ribosomal subunit protein uS7 from Ligilactobacillus salivarius (strain UCC118) (Lactobacillus salivarius).